We begin with the raw amino-acid sequence, 252 residues long: Triosephosphate isomerase (252 aa).

Residue 8–10 (NWK) participates in substrate binding. Residue histidine 95 is the Electrophile of the active site. Glutamate 167 functions as the Proton acceptor in the catalytic mechanism. Substrate-binding positions include glycine 173, serine 212, and 233-234 (GG).

It belongs to the triosephosphate isomerase family. Homodimer.

Its subcellular location is the cytoplasm. It carries out the reaction D-glyceraldehyde 3-phosphate = dihydroxyacetone phosphate. Its pathway is carbohydrate biosynthesis; gluconeogenesis. It functions in the pathway carbohydrate degradation; glycolysis; D-glyceraldehyde 3-phosphate from glycerone phosphate: step 1/1. Its function is as follows. Involved in the gluconeogenesis. Catalyzes stereospecifically the conversion of dihydroxyacetone phosphate (DHAP) to D-glyceraldehyde-3-phosphate (G3P). The protein is Triosephosphate isomerase of Lawsonia intracellularis (strain PHE/MN1-00).